A 723-amino-acid polypeptide reads, in one-letter code: Protein Hook homolog (723 aa).

Positions 4 to 120 (TELCECLVQW…RLLQLILGCA (117 aa)) constitute a Calponin-homology (CH) domain. 2 coiled-coil regions span residues 162-423 (VLPE…MQLQ) and 457-665 (EIKE…IVSA). The segment at 682–723 (LANGGPMQGGQSFLARQRQATSRRTTVSTTHPGHARSVNFVN) is disordered. Low complexity predominate over residues 696–711 (ARQRQATSRRTTVSTT).

The protein belongs to the hook family. In terms of assembly, interacts with microtubules.

It is found in the cytoplasm. It localises to the cytoskeleton. Its function is as follows. May function to promote vesicle trafficking and/or fusion. May act to link a number of membrane-bound organelles to the cytoskeleton. In Branchiostoma floridae (Florida lancelet), this protein is Protein Hook homolog.